The chain runs to 525 residues: GMP synthase [glutamine-hydrolyzing] (525 aa).

Positions 8–207 (KILILDFGSQ…AVAICGCGTN (200 aa)) constitute a Glutamine amidotransferase type-1 domain. The active-site Nucleophile is the cysteine 85. Catalysis depends on residues histidine 181 and glutamate 183. In terms of domain architecture, GMPS ATP-PPase spans 208-400 (WKPSSIIEDA…LGLPYNMLYR (193 aa)). 235–241 (SGGVDSS) is a binding site for ATP.

In terms of assembly, homodimer.

The enzyme catalyses XMP + L-glutamine + ATP + H2O = GMP + L-glutamate + AMP + diphosphate + 2 H(+). The protein operates within purine metabolism; GMP biosynthesis; GMP from XMP (L-Gln route): step 1/1. Its function is as follows. Catalyzes the synthesis of GMP from XMP. The protein is GMP synthase [glutamine-hydrolyzing] of Shewanella denitrificans (strain OS217 / ATCC BAA-1090 / DSM 15013).